The chain runs to 471 residues: Argininosuccinate lyase (471 aa).

This sequence belongs to the lyase 1 family. Argininosuccinate lyase subfamily.

The protein resides in the cytoplasm. The enzyme catalyses 2-(N(omega)-L-arginino)succinate = fumarate + L-arginine. The protein operates within amino-acid biosynthesis; L-arginine biosynthesis; L-arginine from L-ornithine and carbamoyl phosphate: step 3/3. This Ehrlichia canis (strain Jake) protein is Argininosuccinate lyase.